A 901-amino-acid polypeptide reads, in one-letter code: HTH-type transcriptional regulator MalT (901 aa).

39–46 contributes to the ATP binding site; sequence SPAGYGKT. The region spanning 829 to 894 is the HTH luxR-type domain; it reads ELIRTSPLTQ…AAVQHAQKLL (66 aa). A DNA-binding region (H-T-H motif) is located at residues 853 to 872; it reads NEQIAGELEVAATTIKTHIR.

Belongs to the MalT family. As to quaternary structure, monomer in solution. Oligomerizes to an active state in the presence of the positive effectors ATP and maltotriose.

Its activity is regulated as follows. Activated by ATP and maltotriose, which are both required for DNA binding. Its function is as follows. Positively regulates the transcription of the maltose regulon whose gene products are responsible for uptake and catabolism of malto-oligosaccharides. Specifically binds to the promoter region of its target genes, recognizing a short DNA motif called the MalT box. This is HTH-type transcriptional regulator MalT from Escherichia coli O7:K1 (strain IAI39 / ExPEC).